Reading from the N-terminus, the 142-residue chain is Hemoglobin subunit alpha (142 aa).

In terms of domain architecture, Globin spans 2 to 142; sequence VLSATDKSNV…VSTVLTSKYR (141 aa). Ser-4 bears the Phosphoserine mark. Lys-8 and Lys-12 each carry N6-succinyllysine. N6-acetyllysine; alternate is present on Lys-17. The residue at position 17 (Lys-17) is an N6-succinyllysine; alternate. Phosphotyrosine is present on Tyr-25. Ser-36 is modified (phosphoserine). An N6-succinyllysine modification is found at Lys-41. Ser-50 is subject to Phosphoserine. Residue His-59 participates in O2 binding. His-88 lines the heme b pocket. Ser-103 is subject to Phosphoserine. Thr-109 bears the Phosphothreonine mark. Ser-125 is subject to Phosphoserine. Phosphothreonine is present on residues Thr-135 and Thr-138. Position 139 is a phosphoserine (Ser-139).

This sequence belongs to the globin family. Heterotetramer of two alpha chains and two beta chains. As to expression, red blood cells.

Its function is as follows. Involved in oxygen transport from the lung to the various peripheral tissues. Hemopressin acts as an antagonist peptide of the cannabinoid receptor CNR1. Hemopressin-binding efficiently blocks cannabinoid receptor CNR1 and subsequent signaling. The protein is Hemoglobin subunit alpha (HBA) of Alces alces alces (European moose).